The primary structure comprises 718 residues: DNA topoisomerase 1 (718 aa).

In terms of domain architecture, Toprim spans 9-151 (HEVIICEKPK…KFSTLTREEI (143 aa)). The Mg(2+) site is built by Glu15 and Asp113. Residues 162 to 571 (DYGQVDSGAA…EAITEVRSIL (410 aa)) enclose the Topo IA-type catalytic domain. An interaction with DNA region spans residues 202–207 (SAGRVQ). Tyr320 serves as the catalytic O-(5'-phospho-DNA)-tyrosine intermediate. Residues 361-371 (HEGKKEDDAHP) show a composition bias toward basic and acidic residues. The segment at 361–380 (HEGKKEDDAHPAIHPTGLLP) is disordered. 2 consecutive C4-type zinc fingers follow at residues 598-626 (CPAC…YPDC) and 680-706 (CPEC…FPKC).

Belongs to the type IA topoisomerase family. As to quaternary structure, monomer. Requires Mg(2+) as cofactor.

It catalyses the reaction ATP-independent breakage of single-stranded DNA, followed by passage and rejoining.. Releases the supercoiling and torsional tension of DNA, which is introduced during the DNA replication and transcription, by transiently cleaving and rejoining one strand of the DNA duplex. Introduces a single-strand break via transesterification at a target site in duplex DNA. The scissile phosphodiester is attacked by the catalytic tyrosine of the enzyme, resulting in the formation of a DNA-(5'-phosphotyrosyl)-enzyme intermediate and the expulsion of a 3'-OH DNA strand. The free DNA strand then undergoes passage around the unbroken strand, thus removing DNA supercoils. Finally, in the religation step, the DNA 3'-OH attacks the covalent intermediate to expel the active-site tyrosine and restore the DNA phosphodiester backbone. The chain is DNA topoisomerase 1 from Methanothermobacter thermautotrophicus (strain ATCC 29096 / DSM 1053 / JCM 10044 / NBRC 100330 / Delta H) (Methanobacterium thermoautotrophicum).